The primary structure comprises 485 residues: Inosine-5'-monophosphate dehydrogenase (485 aa).

CBS domains follow at residues 99–154 and 156–212; these read IVED…TVKE and MTRE…KNAV. NAD(+) contacts are provided by residues Asp247 and 294 to 296; that span reads GIG. K(+) is bound by residues Gly296 and Gly298. An IMP-binding site is contributed by Ser299. Cys301 contacts K(+). Cys301 acts as the Thioimidate intermediate in catalysis. Residues 334–336, 357–358, and 381–385 contribute to the IMP site; these read DGG, GN, and YRGMG. Residue Arg397 is the Proton acceptor of the active site. Glu412 contributes to the IMP binding site. Glu466, Ser467, and His468 together coordinate K(+).

The protein belongs to the IMPDH/GMPR family. In terms of assembly, homotetramer. Requires K(+) as cofactor.

It carries out the reaction IMP + NAD(+) + H2O = XMP + NADH + H(+). The protein operates within purine metabolism; XMP biosynthesis via de novo pathway; XMP from IMP: step 1/1. With respect to regulation, mycophenolic acid (MPA) is a non-competitive inhibitor that prevents formation of the closed enzyme conformation by binding to the same site as the amobile flap. In contrast, mizoribine monophosphate (MZP) is a competitive inhibitor that induces the closed conformation. MPA is a potent inhibitor of mammalian IMPDHs but a poor inhibitor of the bacterial enzymes. MZP is a more potent inhibitor of bacterial IMPDH. Its function is as follows. Catalyzes the conversion of inosine 5'-phosphate (IMP) to xanthosine 5'-phosphate (XMP), the first committed and rate-limiting step in the de novo synthesis of guanine nucleotides, and therefore plays an important role in the regulation of cell growth. The sequence is that of Inosine-5'-monophosphate dehydrogenase from Pyrococcus furiosus (strain ATCC 43587 / DSM 3638 / JCM 8422 / Vc1).